Consider the following 1263-residue polypeptide: DNA-directed RNA polymerase subunit beta (1263 aa).

Belongs to the RNA polymerase beta chain family. In terms of assembly, the RNAP catalytic core consists of 2 alpha, 1 beta, 1 beta' and 1 omega subunit. When a sigma factor is associated with the core the holoenzyme is formed, which can initiate transcription.

The catalysed reaction is RNA(n) + a ribonucleoside 5'-triphosphate = RNA(n+1) + diphosphate. In terms of biological role, DNA-dependent RNA polymerase catalyzes the transcription of DNA into RNA using the four ribonucleoside triphosphates as substrates. In Thermotoga petrophila (strain ATCC BAA-488 / DSM 13995 / JCM 10881 / RKU-1), this protein is DNA-directed RNA polymerase subunit beta.